Consider the following 159-residue polypeptide: Transcription antitermination protein NusB (159 aa).

Belongs to the NusB family.

Its function is as follows. Involved in transcription antitermination. Required for transcription of ribosomal RNA (rRNA) genes. Binds specifically to the boxA antiterminator sequence of the ribosomal RNA (rrn) operons. The polypeptide is Transcription antitermination protein NusB (Xanthomonas campestris pv. campestris (strain 8004)).